A 365-amino-acid chain; its full sequence is tRNA-specific 2-thiouridylase MnmA (365 aa).

ATP is bound by residues 12-19 (AMSGGVDS) and methionine 38. The active-site Nucleophile is the cysteine 108. The cysteines at positions 108 and 206 are disulfide-linked. Glycine 132 lines the ATP pocket. The interval 156 to 158 (KDQ) is interaction with tRNA. Catalysis depends on cysteine 206, which acts as the Cysteine persulfide intermediate. Positions 312-313 (RY) are interaction with tRNA.

This sequence belongs to the MnmA/TRMU family.

It is found in the cytoplasm. The enzyme catalyses S-sulfanyl-L-cysteinyl-[protein] + uridine(34) in tRNA + AH2 + ATP = 2-thiouridine(34) in tRNA + L-cysteinyl-[protein] + A + AMP + diphosphate + H(+). Its function is as follows. Catalyzes the 2-thiolation of uridine at the wobble position (U34) of tRNA, leading to the formation of s(2)U34. The sequence is that of tRNA-specific 2-thiouridylase MnmA from Carboxydothermus hydrogenoformans (strain ATCC BAA-161 / DSM 6008 / Z-2901).